Consider the following 92-residue polypeptide: UPF0223 protein EF_2462 (92 aa).

The protein belongs to the UPF0223 family.

This chain is UPF0223 protein EF_2462, found in Enterococcus faecalis (strain ATCC 700802 / V583).